Consider the following 232-residue polypeptide: Beta-casein (232 aa).

The first 15 residues, 1–15 (MKLLILACFVALALA), serve as a signal peptide directing secretion. A glycan (N-linked (GlcNAc...) asparagine) is linked at asparagine 22. Serine 24 is modified (phosphoserine). The residue at position 27 (threonine 27) is a Phosphothreonine. Phosphoserine is present on residues serine 30, serine 32, serine 33, and serine 34. Over residues 48-63 (KLKREEQQQTENERQN) the composition is skewed to basic and acidic residues. The disordered stretch occupies residues 48-74 (KLKREEQQQTENERQNKIHQFPQPQPL).

It belongs to the beta-casein family. As to expression, mammary gland specific. Secreted in milk.

The protein localises to the secreted. Its function is as follows. Important role in determination of the surface properties of the casein micelles. This Sus scrofa (Pig) protein is Beta-casein (CSN2).